A 552-amino-acid chain; its full sequence is Thermosome subunit beta (552 aa).

Residues 531 to 552 form a disordered region; it reads AGKKGGSEPGGKKEKEEKSSED. The segment covering 540–552 has biased composition (basic and acidic residues); it reads GGKKEKEEKSSED.

This sequence belongs to the TCP-1 chaperonin family. As to quaternary structure, forms a heterooligomeric complex of two stacked nine-membered rings; one of alpha and the other of beta subunits. Sometimes called a 'rosettasome'.

Its subcellular location is the cytoplasm. The catalysed reaction is ATP + H2O = ADP + phosphate + H(+). Functionally, molecular chaperone; binds unfolded polypeptides in vitro, stimulates protein folding and has ATPase activity. One of the most abundant proteins in the cell at all temperatures. The chain is Thermosome subunit beta (thsB) from Saccharolobus shibatae (strain ATCC 51178 / DSM 5389 / JCM 8931 / NBRC 15437 / B12) (Sulfolobus shibatae).